Consider the following 264-residue polypeptide: Acyl-[acyl-carrier-protein]--UDP-N-acetylglucosamine O-acyltransferase (264 aa).

It belongs to the transferase hexapeptide repeat family. LpxA subfamily. Homotrimer.

Its subcellular location is the cytoplasm. The enzyme catalyses a (3R)-hydroxyacyl-[ACP] + UDP-N-acetyl-alpha-D-glucosamine = a UDP-3-O-[(3R)-3-hydroxyacyl]-N-acetyl-alpha-D-glucosamine + holo-[ACP]. Its pathway is glycolipid biosynthesis; lipid IV(A) biosynthesis; lipid IV(A) from (3R)-3-hydroxytetradecanoyl-[acyl-carrier-protein] and UDP-N-acetyl-alpha-D-glucosamine: step 1/6. Involved in the biosynthesis of lipid A, a phosphorylated glycolipid that anchors the lipopolysaccharide to the outer membrane of the cell. In Glaesserella parasuis serovar 5 (strain SH0165) (Haemophilus parasuis), this protein is Acyl-[acyl-carrier-protein]--UDP-N-acetylglucosamine O-acyltransferase.